A 315-amino-acid polypeptide reads, in one-letter code: MTTMQLDSDGRLRHLLTLEGVPRTTLLQLLDRAGQIRDAAVGRVGKRSVLAGTAVCTLFFEPSTRTRSSFHLAAQRLGADVLNFDASTSSTRKGETARDTLKNLEAMGVRGFVVRHPDDGAVKALAAAAGEGTALINAGDGRSAHPTQGLLDMLTLRQAKGTDFSKLKVVIVGDVKHSRVARSDLHALRTLGAGEIRVCGPASLLPDDGILEGCVVGQDFDAMLEGADALMMLRLQRERMEEGLVPSLEQYHTEYGLTRERLARAGHDAAVLHPGPINRGVEITDEVADGAQSCVLRQVANGVAVRMAVLETLLG.

Carbamoyl phosphate is bound by residues arginine 65 and threonine 66. L-aspartate is bound at residue lysine 93. Residues arginine 115, histidine 145, and glutamine 148 each coordinate carbamoyl phosphate. L-aspartate-binding residues include arginine 179 and arginine 234. The carbamoyl phosphate site is built by glycine 275 and proline 276.

This sequence belongs to the aspartate/ornithine carbamoyltransferase superfamily. ATCase family. In terms of assembly, heterododecamer (2C3:3R2) of six catalytic PyrB chains organized as two trimers (C3), and six regulatory PyrI chains organized as three dimers (R2).

It catalyses the reaction carbamoyl phosphate + L-aspartate = N-carbamoyl-L-aspartate + phosphate + H(+). Its pathway is pyrimidine metabolism; UMP biosynthesis via de novo pathway; (S)-dihydroorotate from bicarbonate: step 2/3. Functionally, catalyzes the condensation of carbamoyl phosphate and aspartate to form carbamoyl aspartate and inorganic phosphate, the committed step in the de novo pyrimidine nucleotide biosynthesis pathway. The protein is Aspartate carbamoyltransferase catalytic subunit of Xanthomonas oryzae pv. oryzae (strain MAFF 311018).